A 130-amino-acid polypeptide reads, in one-letter code: MSWQSYVDSFLVGAGKGMGGAIIGLQGGVWAASANCTPSAQESVAIGTACASNIAGLQQTGVVIGGKKYMITRVDADEGTAMGKKGAEGISIYKTKQAVIIGYFSDASVSAGQNSDATYKCAKYLMDAGY.

Belongs to the profilin family. In terms of assembly, interacts with actin. Interacts with RHO1 (GTP-bound form).

It localises to the cytoplasm. The protein localises to the cytoskeleton. The protein resides in the cell projection. It is found in the phagocytic cup. Its subcellular location is the cytoplasmic vesicle. It localises to the phagosome. Its function is as follows. Binds to actin and affects the structure of the cytoskeleton. At high concentrations, profilin prevents the polymerization of actin, whereas it enhances it at low concentrations. By binding to PIP2, it inhibits the formation of IP3 and DG. This Entamoeba histolytica (strain ATCC 30459 / HM-1:IMSS / ABRM) protein is Profilin-1.